Reading from the N-terminus, the 626-residue chain is Receptor-like protein 4 (626 aa).

The N-terminal stretch at 1–22 is a signal peptide; the sequence is MMLRFILASLLLSSFSLYSSLA. Residues 23-549 lie on the Extracellular side of the membrane; it reads RPAPYALRIS…CGPHLSSGAK (527 aa). Residues asparagine 61, asparagine 282, asparagine 333, and asparagine 417 are each glycosylated (N-linked (GlcNAc...) asparagine). 4 LRR repeats span residues 420–444, 445–468, 470–492, and 493–516; these read RWFI…ISKL, KHLQ…LGSV, SLEV…LGEL, and TSLR…VGGR. N-linked (GlcNAc...) asparagine glycans are attached at residues asparagine 451 and asparagine 482. A glycan (N-linked (GlcNAc...) asparagine) is linked at asparagine 524. A helical membrane pass occupies residues 550 to 570; that stretch reads IGIAFGVSLAFLLIVACAMIW. Topologically, residues 571–626 are cytoplasmic; that stretch reads WKRRQNILRAQQIAARGAPYAKKRTHVSHDIQMSRHGHNNHGQARTAVENGPSLLS. The disordered stretch occupies residues 603–626; it reads MSRHGHNNHGQARTAVENGPSLLS.

Belongs to the RLP family.

It localises to the cell membrane. The polypeptide is Receptor-like protein 4 (Arabidopsis thaliana (Mouse-ear cress)).